We begin with the raw amino-acid sequence, 449 residues long: Dynein axonemal assembly factor 3 (449 aa).

It belongs to the DNAAF3 family.

It is found in the cytoplasm. Its subcellular location is the dynein axonemal particle. Required for the assembly of axonemal inner and outer dynein arms. Involved in preassembly of dyneins into complexes before their transport into cilia. The polypeptide is Dynein axonemal assembly factor 3 (dnaaf3) (Xenopus tropicalis (Western clawed frog)).